The primary structure comprises 1669 residues: MGPRLGVWLLLLLAALLLHEESSRAAAKGGCAGSGCGKCDCHGVKGQKGERGLPGLQGVIGFPGMQGPEGPQGPPGQKGDTGEPGLPGTKGTRGPSGVPGYPGNPGLPGIPGQDGPPGPPGIPGCNGTKGERGPVGPPGLPGFAGNPGPPGLPGMKGDPGEILGHIPGTLLKGERGYPGQPGAPGSPGLPGLQGPVGPPGFTGPPGPPGPPGPPGEKGQMGLSFQGPKGEKGDQGVSGPPGLPGQAQVITKGDTAMRGEKGQKGEPGFPGLPGFGEKGEPGKPGPRGKPGKDGEKGEKGSPGFPGDSGYPGQPGQDGLKGEKGEAGPPGLPGTVIGTGPLGEKGEPGYPGGPGAKGETGPKGFPGIPGQPGPPGFPTPGLIGAPGFPGDRGEKGEPGLPGVSLPGPSGRDGLPGPPGPPGPPGQPGHTNGIVECQPGPPGDQGPPGIPGQPGLTGEVGEKGQKGDSCLVCDTAELRGPPGPQGPPGEIGFPGQPGAKGDRGLPGRDGLEGLPGPQGAPGLMGQPGAKGEPGEIYFDIRLKGDKGDPGFPGQPGMPGRAGSPGRDGQPGLPGPRGSPGSVGLKGERGPPGGVGFPGSRGDIGPPGPPGFGPIGPIGDKGQIGFPGTPGAPGQPGPKGEAGKVVPLPGPPGAEGLPGSPGFQGPQGDRGFPGSPGRPGLPGEKGAIGQPGIGFPGPPGPKGVDGLPGDAGPPGNPGRQGFNGLPGNPGPPGQKGEPGVGLPGLKGLPGIPGIPGTPGEKGNVGGPGIPGEHGAIGPPGLQGLRGDPGPPGFQGPKGAPGVPGIGPPGAMGPPGGQGPPGSSGPPGVKGEKGFPGFPGLDMPGPKGDKGSQGLPGLTGQSGLPGLPGQQGTPGQPGIPGPKGEMGVMGTPGQPGSPGPAGVPGLPGAKGDHGFPGSSGPRGDPGFKGDKGDVGLPGKPGSMDKVDMGSMKGEKGDQGEKGQTGPTGDKGSRGDPGTPGVPGKDGQAGHPGQPGPKGDPGVSGIPGAPGLPGPKGSAGGMGLPGMPGPKGVAGIPGPQGIPGLPGDKGAKGEKGQAGLPGIGIPGRPGDKGDQGLAGFPGSPGEKGEKGSTGIPGMPGSPGPKGSPGSVGYPGSPGLPGEKGDKGLPGLDGIPGIKGEAGLPGKPGPTGPAGQKGEPGSDGIPGSVGEKGESGLPGRGFPGFPGSKGDKGSKGDVGFPGLSGSPGIPGSKGEQGFMGPPGPQGQPGLPGTPGHAVEGPKGDRGPQGQPGLPGRPGPMGPPGLPGLEGLKGERGNPGWPGTPGAPGPKGDPGFQGMPGIGGSPGITGAKGDVGPPGVPGFHGQKGAPGLQGVKGDQGDQGFPGTKGLPGPPGPPGPFSIIKGEPGLPGPEGPAGLKGLQGPPGPKGQQGVTGSVGLPGPPGEPGFDGAPGQKGETGPFGPPGPRGFPGPPGPDGLPGSMGPPGTPSVDHGFLVTRHSQTTDDPQCPPGTKILYHGYSLLYVQGNERAHGQDLGTAGSCLRKFSTMPFLFCNINNVCNFASRNDYSYWLSTPEPMPMSMAPITGENIRPFISRCAVCEAPAMVMAVHSQTIQIPQCPTGWSSLWIGYSFVMHTSAGAEGSGQALASPGSCLEEFRSAPFIECHGRGTCNYYANAYSFWLATIERSEMFKKPTPSTLKAGELRTHVSRCQVCMRRT.

An N-terminal signal peptide occupies residues 1 to 27 (MGPRLGVWLLLLLAALLLHEESSRAAA). Residues 28 to 172 (KGGCAGSGCG…LGHIPGTLLK (145 aa)) constitute a propeptide, N-terminal propeptide (7S domain). Residues 50-1445 (ERGLPGLQGV…PPGTPSVDHG (1396 aa)) are disordered. The segment at 173–1440 (GERGYPGQPG…PGSMGPPGTP (1268 aa)) is triple-helical region. Positions 196–214 (VGPPGFTGPPGPPGPPGPP) are enriched in pro residues. Residues proline 204, proline 207, and proline 210 each carry the 3-hydroxyproline modification. Composition is skewed to basic and acidic residues over residues 254–263 (TAMRGEKGQK) and 289–298 (PGKDGEKGEK). The span at 347–356 (GYPGGPGAKG) shows a compositional bias: gly residues. The span at 357 to 366 (ETGPKGFPGI) shows a compositional bias: low complexity. A compositionally biased stretch (pro residues) spans 367–376 (PGQPGPPGFP). A compositionally biased stretch (low complexity) spans 396–412 (PGLPGVSLPGPSGRDGL). 2 stretches are compositionally biased toward pro residues: residues 413–424 (PGPPGPPGPPGQ) and 436–448 (PGPP…PGIP). Over residues 485–494 (PGEIGFPGQP) the composition is skewed to low complexity. Composition is skewed to basic and acidic residues over residues 497–508 (KGDRGLPGRDGL) and 535–545 (FDIRLKGDKGD). The segment covering 586 to 595 (GPPGGVGFPG) has biased composition (gly residues). Proline 587 and proline 602 each carry 3-hydroxyproline. Proline 603 bears the 4-hydroxyproline mark. 3-hydroxyproline is present on proline 605. 5 positions are modified to 4-hydroxyproline: proline 606, proline 623, proline 626, proline 629, and proline 632. The residue at position 647 (proline 647) is a 3-hydroxyproline. 2 stretches are compositionally biased toward gly residues: residues 758 to 767 (GNVGGPGIPG) and 797 to 817 (GVPG…GPPG). A compositionally biased stretch (low complexity) spans 847–871 (SQGLPGLTGQSGLPGLPGQQGTPGQ). Residues 937-955 (SMDKVDMGSMKGEKGDQGE) are compositionally biased toward basic and acidic residues. The span at 1011–1020 (GSAGGMGLPG) shows a compositional bias: gly residues. 3 stretches are compositionally biased toward low complexity: residues 1030 to 1040 (IPGPQGIPGLP), 1101 to 1114 (SPGS…PGLP), and 1193 to 1212 (FPGL…QGFM). The residue at position 1214 (proline 1214) is a 3-hydroxyproline. Positions 1247–1258 (PGRPGPMGPPGL) are enriched in pro residues. Gly residues predominate over residues 1290 to 1299 (GMPGIGGSPG). Positions 1413–1428 (FGPPGPRGFPGPPGPD) are enriched in pro residues. Proline 1424 is subject to 3-hydroxyproline. In terms of domain architecture, Collagen IV NC1 spans 1445–1669 (GFLVTRHSQT…SRCQVCMRRT (225 aa)). 6 disulfide bridges follow: cysteine 1460–cysteine 1551, cysteine 1493–cysteine 1548, cysteine 1505–cysteine 1511, cysteine 1570–cysteine 1665, cysteine 1604–cysteine 1662, and cysteine 1616–cysteine 1622. Residue methionine 1533 forms an S-Lysyl-methionine sulfilimine (Met-Lys) (interchain with K-1651) linkage. Lysine 1651 is covalently cross-linked (S-Lysyl-methionine sulfilimine (Lys-Met) (interchain with M-1533)).

The protein belongs to the type IV collagen family. In terms of assembly, there are six type IV collagen isoforms, alpha 1(IV)-alpha 6(IV), each of which can form a triple helix structure with 2 other chains to generate type IV collagen network. Interacts with EFEMP2. In terms of processing, lysines at the third position of the tripeptide repeating unit (G-X-Y) are hydroxylated in all cases. The modified lysines can be O-glycosylated. Contains 4-hydroxyproline. Prolines at the third position of the tripeptide repeating unit (G-X-Y) are hydroxylated in some or all of the chains. Post-translationally, contains 3-hydroxyproline. This modification occurs on the first proline residue in the sequence motif Gly-Pro-Hyp, where Hyp is 4-hydroxyproline. In terms of processing, type IV collagens contain numerous cysteine residues which are involved in inter- and intramolecular disulfide bonding. 12 of these, located in the NC1 domain, are conserved in all known type IV collagens. The trimeric structure of the NC1 domains is stabilized by covalent bonds (sulfilimine cross-links) between Lys and Met residues. These cross-links are important for the mechanical stability of the basement membrane. Sulfilimine cross-link is catalyzed by PXDN. Post-translationally, proteolytic processing produces the C-terminal NC1 peptide, arresten.

It localises to the secreted. The protein resides in the extracellular space. It is found in the extracellular matrix. Its subcellular location is the basement membrane. In terms of biological role, type IV collagen is the major structural component of glomerular basement membranes (GBM), forming a 'chicken-wire' meshwork together with laminins, proteoglycans and entactin/nidogen. Functionally, arresten, comprising the C-terminal NC1 domain, inhibits angiogenesis and tumor formation. The C-terminal half is found to possess the anti-angiogenic activity. Specifically inhibits endothelial cell proliferation, migration and tube formation. The polypeptide is Collagen alpha-1(IV) chain (Bos taurus (Bovine)).